The chain runs to 522 residues: 2-isopropylmalate synthase (522 aa).

Residues 5–267 enclose the Pyruvate carboxyltransferase domain; it reads VIIFDTTLRD…ETGINAKEIH (263 aa). Aspartate 14, histidine 202, histidine 204, and asparagine 238 together coordinate Mn(2+). The interval 392–522 is regulatory domain; it reads QLQQLVVQSD…MHKNRELGGV (131 aa).

Belongs to the alpha-IPM synthase/homocitrate synthase family. LeuA type 1 subfamily. As to quaternary structure, homodimer. Mn(2+) is required as a cofactor.

The protein resides in the cytoplasm. The enzyme catalyses 3-methyl-2-oxobutanoate + acetyl-CoA + H2O = (2S)-2-isopropylmalate + CoA + H(+). Its pathway is amino-acid biosynthesis; L-leucine biosynthesis; L-leucine from 3-methyl-2-oxobutanoate: step 1/4. In terms of biological role, catalyzes the condensation of the acetyl group of acetyl-CoA with 3-methyl-2-oxobutanoate (2-ketoisovalerate) to form 3-carboxy-3-hydroxy-4-methylpentanoate (2-isopropylmalate). The sequence is that of 2-isopropylmalate synthase from Shewanella sp. (strain MR-4).